An 824-amino-acid polypeptide reads, in one-letter code: Disintegrin and metalloproteinase domain-containing protein 17 (824 aa).

Residues 1-17 form the signal peptide; sequence MRQSLLFLTSVVPFVLA. The propeptide occupies 18 to 214; it reads PRPPDDPGFG…PEELVHRVKR (197 aa). N-linked (GlcNAc...) asparagine glycosylation is found at asparagine 103, asparagine 157, and asparagine 174. A Cysteine switch motif is present at residues 182-189; it reads KVCGYLKV. Cysteine 184 serves as a coordination point for Zn(2+). Topologically, residues 215 to 671 are extracellular; the sequence is RADPDPMKNT…NTFGKFLADN (457 aa). In terms of domain architecture, Peptidase M12B spans 223 to 474; that stretch reads NTCKLLVVAD…KAQECFQERS (252 aa). Disulfide bonds link cysteine 225-cysteine 333, cysteine 365-cysteine 469, and cysteine 423-cysteine 453. Asparagine 264 carries N-linked (GlcNAc...) asparagine glycosylation. Histidine 405 is a Zn(2+) binding site. The active site involves glutamate 406. Zn(2+)-binding residues include histidine 409 and histidine 415. 4 N-linked (GlcNAc...) asparagine glycosylation sites follow: asparagine 452, asparagine 498, asparagine 539, and asparagine 551. Residues 475–563 form the Disintegrin domain; sequence NKVCGNSRVD…ECPPPGNAED (89 aa). Disulfide bonds link cysteine 534-cysteine 555, cysteine 573-cysteine 582, cysteine 578-cysteine 591, and cysteine 593-cysteine 600. Asparagine 594 carries N-linked (GlcNAc...) asparagine glycosylation. The tract at residues 603-671 is crambin-like; the sequence is CCRDLSGRCV…NTFGKFLADN (69 aa). The helical transmembrane segment at 672-692 threads the bilayer; the sequence is IVGSVLVFSLIFWIPFSILVH. Residues 693-824 are Cytoplasmic-facing; the sequence is CVDKKLDKQY…NRVDSKETEC (132 aa). 2 short sequence motifs (SH3-binding) span residues 731 to 738 and 741 to 748; these read PAPQTPGR and PAPVIPSA. Positions 732 to 824 are disordered; it reads APQTPGRLQP…NRVDSKETEC (93 aa). Threonine 735 is subject to Phosphothreonine; by MAPK14. The segment covering 741–752 has biased composition (low complexity); it reads PAPVIPSAPAAP. A Phosphothreonine modification is found at threonine 761. Position 767 is a phosphoserine (serine 767). Composition is skewed to basic and acidic residues over residues 768–781, 791–807, and 815–824; these read TDSH…EKDP, SFED…EKAA, and NRVDSKETEC. Phosphoserine occurs at positions 791 and 819.

In terms of assembly, interacts with MAD2L1, MAPK14 and MUC1. Interacts with iRhom1/RHBDF1 and iRhom2/RHBDF2. Interacts with FRMD8 via its interaction with iRhom1/RHBDF1 and iRhom2/RHBDF2. Interacts with TSPAN8. The cofactor is Zn(2+). In terms of processing, the precursor is cleaved by a furin endopeptidase. Post-translationally, phosphorylated. Stimulation by growth factor or phorbol 12-myristate 13-acetate induces phosphorylation of Ser-819 but decreases phosphorylation of Ser-791. Phosphorylation at Thr-735 by MAPK14 is required for ADAM17-mediated ectodomain shedding. As to expression, ubiquitously expressed. Expressed at highest levels in adult heart, placenta, skeletal muscle, pancreas, spleen, thymus, prostate, testes, ovary and small intestine, and in fetal brain, lung, liver and kidney. Expressed in natural killer cells (at protein level).

It is found in the cell membrane. It carries out the reaction Narrow endopeptidase specificity. Cleaves Pro-Leu-Ala-Gln-Ala-|-Val-Arg-Ser-Ser-Ser in the membrane-bound, 26-kDa form of tumor necrosis factor alpha (TNFalpha). Similarly cleaves other membrane-anchored, cell-surface proteins to 'shed' the extracellular domains.. In terms of biological role, transmembrane metalloprotease which mediates the ectodomain shedding of a myriad of transmembrane proteins including adhesion proteins, growth factor precursors and cytokines important for inflammation and immunity. Cleaves the membrane-bound precursor of TNF-alpha to its mature soluble form. Responsible for the proteolytical release of soluble JAM3 from endothelial cells surface. Responsible for the proteolytic release of several other cell-surface proteins, including p75 TNF-receptor, interleukin 1 receptor type II, p55 TNF-receptor, transforming growth factor-alpha, L-selectin, growth hormone receptor, MUC1 and the amyloid precursor protein. Acts as an activator of Notch pathway by mediating cleavage of Notch, generating the membrane-associated intermediate fragment called Notch extracellular truncation (NEXT). Plays a role in the proteolytic processing of ACE2. Plays a role in hemostasis through shedding of GP1BA, the platelet glycoprotein Ib alpha chain. Mediates the proteolytic cleavage of LAG3, leading to release the secreted form of LAG3. Mediates the proteolytic cleavage of IL6R, leading to the release of secreted form of IL6R. Mediates the proteolytic cleavage and shedding of FCGR3A upon NK cell stimulation, a mechanism that allows for increased NK cell motility and detachment from opsonized target cells. Cleaves TREM2, resulting in shedding of the TREM2 ectodomain. This chain is Disintegrin and metalloproteinase domain-containing protein 17, found in Homo sapiens (Human).